The following is a 271-amino-acid chain: Formamidopyrimidine-DNA glycosylase (271 aa).

Pro2 serves as the catalytic Schiff-base intermediate with DNA. Glu3 functions as the Proton donor in the catalytic mechanism. Lys57 serves as the catalytic Proton donor; for beta-elimination activity. Residues His90, Arg109, and Lys151 each contribute to the DNA site. An FPG-type zinc finger spans residues 236 to 270 (HVYGRGGETCTSCGNLLSEIRLGQRTTVFCGICQT). Arg260 acts as the Proton donor; for delta-elimination activity in catalysis.

This sequence belongs to the FPG family. Monomer. Requires Zn(2+) as cofactor.

The enzyme catalyses Hydrolysis of DNA containing ring-opened 7-methylguanine residues, releasing 2,6-diamino-4-hydroxy-5-(N-methyl)formamidopyrimidine.. It carries out the reaction 2'-deoxyribonucleotide-(2'-deoxyribose 5'-phosphate)-2'-deoxyribonucleotide-DNA = a 3'-end 2'-deoxyribonucleotide-(2,3-dehydro-2,3-deoxyribose 5'-phosphate)-DNA + a 5'-end 5'-phospho-2'-deoxyribonucleoside-DNA + H(+). In terms of biological role, involved in base excision repair of DNA damaged by oxidation or by mutagenic agents. Acts as a DNA glycosylase that recognizes and removes damaged bases. Has a preference for oxidized purines, such as 7,8-dihydro-8-oxoguanine (8-oxoG). Has AP (apurinic/apyrimidinic) lyase activity and introduces nicks in the DNA strand. Cleaves the DNA backbone by beta-delta elimination to generate a single-strand break at the site of the removed base with both 3'- and 5'-phosphates. The protein is Formamidopyrimidine-DNA glycosylase of Shewanella baltica (strain OS155 / ATCC BAA-1091).